We begin with the raw amino-acid sequence, 199 residues long: Transgelin-2 (199 aa).

The residue at position 2 (Ala2) is an N-acetylalanine. Ser11 is modified (phosphoserine). An N6-acetyllysine mark is found at Lys17 and Lys20. A Calponin-homology (CH) domain is found at 24-136; it reads ADLEQILIQW…RTLMNLGGLA (113 aa). Ser163 bears the Phosphoserine mark. Lys171 participates in a covalent cross-link: Glycyl lysine isopeptide (Lys-Gly) (interchain with G-Cter in SUMO2). One copy of the Calponin-like repeat lies at 174–199; it reads IGLQMGTNRGASQAGMTGYGMPRQIL. Phosphothreonine is present on Thr180. Arg182 and Arg196 each carry omega-N-methylarginine.

This sequence belongs to the calponin family. In terms of tissue distribution, expressed in epididymis (at protein level).

The chain is Transgelin-2 (TAGLN2) from Homo sapiens (Human).